A 206-amino-acid polypeptide reads, in one-letter code: MTNRVLVIASGNAGKIREFSNLLQELPLQVNPQPDGIQVEETGITFRDNALLKARAVAEATGHWALADDSGLSVDALGGAPGVYSARYANSDPERIERLLKELGDRTDRQARFSAALCIAAPDGSVLAAVEGYCEGSITFSARGTQGFGYDPVFEVKNSGLTFAEMTQDHKKQHGHRGRAFALLKPELEKLLENDPGQDAGATPIP.

10 to 15 lines the substrate pocket; the sequence is SGNAGK. The Mg(2+) site is built by glutamate 40 and aspartate 69. The active-site Proton acceptor is aspartate 69. Residues serine 70, 148–151, lysine 171, and 176–177 contribute to the substrate site; these read FGYD and HR.

The protein belongs to the HAM1 NTPase family. As to quaternary structure, homodimer. Mg(2+) is required as a cofactor.

It carries out the reaction XTP + H2O = XMP + diphosphate + H(+). It catalyses the reaction dITP + H2O = dIMP + diphosphate + H(+). The enzyme catalyses ITP + H2O = IMP + diphosphate + H(+). In terms of biological role, pyrophosphatase that catalyzes the hydrolysis of nucleoside triphosphates to their monophosphate derivatives, with a high preference for the non-canonical purine nucleotides XTP (xanthosine triphosphate), dITP (deoxyinosine triphosphate) and ITP. Seems to function as a house-cleaning enzyme that removes non-canonical purine nucleotides from the nucleotide pool, thus preventing their incorporation into DNA/RNA and avoiding chromosomal lesions. The chain is dITP/XTP pyrophosphatase from Synechococcus sp. (strain CC9311).